We begin with the raw amino-acid sequence, 375 residues long: Alcohol dehydrogenase 1 (375 aa).

An N-acetylserine modification is found at Ser-2. Positions 47, 68, 98, 101, 104, 112, and 175 each coordinate Zn(2+). NAD(+) is bound by residues 200 to 205, Asp-224, and Lys-229; that span reads WSGRVG. Lys-234 bears the N6-succinyllysine mark. 293-295 lines the NAD(+) pocket; sequence VGV. An N6-succinyllysine modification is found at Lys-340. Arg-370 lines the NAD(+) pocket.

The protein belongs to the zinc-containing alcohol dehydrogenase family. Class-I subfamily. In terms of assembly, homodimer. The cofactor is Zn(2+).

It localises to the cytoplasm. The enzyme catalyses a primary alcohol + NAD(+) = an aldehyde + NADH + H(+). It catalyses the reaction a secondary alcohol + NAD(+) = a ketone + NADH + H(+). The polypeptide is Alcohol dehydrogenase 1 (ADH1) (Geomys knoxjonesi (Jones' pocket gopher)).